The chain runs to 335 residues: Glyceraldehyde-3-phosphate dehydrogenase (335 aa).

Residues 15–16 (RI) and D37 contribute to the NAD(+) site. D-glyceraldehyde 3-phosphate-binding positions include 155–157 (SCT), T186, R201, 214–215 (TG), and R237. The Nucleophile role is filled by C156. Residues Q301 and N318 each coordinate NAD(+).

It belongs to the glyceraldehyde-3-phosphate dehydrogenase family. In terms of assembly, homotetramer.

It is found in the cytoplasm. It catalyses the reaction D-glyceraldehyde 3-phosphate + phosphate + NADP(+) = (2R)-3-phospho-glyceroyl phosphate + NADPH + H(+). The enzyme catalyses D-glyceraldehyde 3-phosphate + phosphate + NAD(+) = (2R)-3-phospho-glyceroyl phosphate + NADH + H(+). Its pathway is carbohydrate degradation; glycolysis; pyruvate from D-glyceraldehyde 3-phosphate: step 1/5. This Haloarcula vallismortis (Halobacterium vallismortis) protein is Glyceraldehyde-3-phosphate dehydrogenase (gap).